The chain runs to 466 residues: Probable sensor protein PcoS (466 aa).

Residues 1-10 are Cytoplasmic-facing; sequence MRFKISLTTR. Residues 11–31 traverse the membrane as a helical segment; that stretch reads LSLIFSAVMLTVWWLSSFILI. Over 32–171 the chain is Periplasmic; that stretch reads STLNDYFDNQ…HTLLMDKLST (140 aa). A helical transmembrane segment spans residues 172-192; that stretch reads WLFWFNIGLVFISVFLGWLTT. The region spanning 193 to 246 is the HAMP domain; it reads RIGLKPLREMTSLASSMTVHSLDQRLNPDLAPPEISETMQEFNNMFDRLEGAFR. The Cytoplasmic segment spans residues 193–466; the sequence is RIGLKPLREM…IVFKVRLLMD (274 aa). Residues 254-466 form the Histidine kinase domain; the sequence is DIAHELRTPV…IVFKVRLLMD (213 aa). H257 carries the post-translational modification Phosphohistidine; by autocatalysis.

The protein resides in the cell inner membrane. It catalyses the reaction ATP + protein L-histidine = ADP + protein N-phospho-L-histidine.. Probable member of a two-component regulatory system PcoS/PcoR. May activate PcoR by phosphorylation. This chain is Probable sensor protein PcoS (pcoS), found in Escherichia coli.